We begin with the raw amino-acid sequence, 217 residues long: Imidazole glycerol phosphate synthase subunit HisH (217 aa).

The Glutamine amidotransferase type-1 domain occupies 3 to 217; that stretch reads TIAIVDYGVG…LYRNFVHWNP (215 aa). Cys-82 (nucleophile) is an active-site residue. Residues His-197 and Glu-199 contribute to the active site.

As to quaternary structure, heterodimer of HisH and HisF.

Its subcellular location is the cytoplasm. The catalysed reaction is 5-[(5-phospho-1-deoxy-D-ribulos-1-ylimino)methylamino]-1-(5-phospho-beta-D-ribosyl)imidazole-4-carboxamide + L-glutamine = D-erythro-1-(imidazol-4-yl)glycerol 3-phosphate + 5-amino-1-(5-phospho-beta-D-ribosyl)imidazole-4-carboxamide + L-glutamate + H(+). It carries out the reaction L-glutamine + H2O = L-glutamate + NH4(+). It participates in amino-acid biosynthesis; L-histidine biosynthesis; L-histidine from 5-phospho-alpha-D-ribose 1-diphosphate: step 5/9. Its function is as follows. IGPS catalyzes the conversion of PRFAR and glutamine to IGP, AICAR and glutamate. The HisH subunit catalyzes the hydrolysis of glutamine to glutamate and ammonia as part of the synthesis of IGP and AICAR. The resulting ammonia molecule is channeled to the active site of HisF. The polypeptide is Imidazole glycerol phosphate synthase subunit HisH (Cupriavidus pinatubonensis (strain JMP 134 / LMG 1197) (Cupriavidus necator (strain JMP 134))).